Consider the following 180-residue polypeptide: Large ribosomal subunit protein uL6 (180 aa).

This sequence belongs to the universal ribosomal protein uL6 family. In terms of assembly, part of the 50S ribosomal subunit.

In terms of biological role, this protein binds to the 23S rRNA, and is important in its secondary structure. It is located near the subunit interface in the base of the L7/L12 stalk, and near the tRNA binding site of the peptidyltransferase center. The polypeptide is Large ribosomal subunit protein uL6 (Clostridium botulinum (strain Loch Maree / Type A3)).